The following is a 161-amino-acid chain: Epoxidase gkaX (161 aa).

The first 18 residues, 1 to 18 (MSLSTSLRLLRLLPAISS), serve as a signal peptide directing secretion. Asn45 carries N-linked (GlcNAc...) asparagine glycosylation. 3 helical membrane-spanning segments follow: residues 59–79 (WQWI…LNLV), 92–112 (IWYV…KMAL), and 139–159 (WVRA…AAVS).

This sequence belongs to the epoxidase xenD family.

The protein localises to the membrane. It functions in the pathway mycotoxin biosynthesis. In terms of biological role, epoxidase; part of the gene cluster that mediates the biosynthesis of GKK1032, fungal natural products containing a macrocyclic para-cyclophane connected to a decahydrofluorene ring system that show potent antitumor activities. Within the pathway, gkaX functions synergistically with gkaB and gkaZ to form the cyclophane. The pathway begins with the PKS-NRPS gkaA which, with the help of the trans-enoyl reductase gkaC, synthesizes the polyketide-tyrosyl acyl thioester product which can be reductively off-loaded by the terminal reductase (R) domain in gkaA. The alpha/beta hydrolase gkaG is then required to catalyze the subsequent Knoevenagel condensation that affords the 3-pyrrolin-2-one ring, whereas the three proteins gkaB, gkaX and gkaZ then function synergistically to form the cyclophane. The polypeptide is Epoxidase gkaX (Penicillium citrinum).